The chain runs to 181 residues: TATA-box-binding protein (181 aa).

A run of 2 repeats spans residues 7–83 and 98–173.

It belongs to the TBP family.

In terms of biological role, general factor that plays a role in the activation of archaeal genes transcribed by RNA polymerase. Binds specifically to the TATA box promoter element which lies close to the position of transcription initiation. This chain is TATA-box-binding protein, found in Methanococcus maripaludis (strain C7 / ATCC BAA-1331).